The primary structure comprises 319 residues: Ornithine carbamoyltransferase (319 aa).

Carbamoyl phosphate contacts are provided by residues 55–58 (STRT), glutamine 82, arginine 106, and 133–136 (HPCQ). L-ornithine-binding positions include asparagine 171, aspartate 234, and 238-239 (SM). Residues 274 to 275 (CL) and arginine 302 each bind carbamoyl phosphate.

This sequence belongs to the aspartate/ornithine carbamoyltransferase superfamily. OTCase family.

The protein localises to the cytoplasm. The catalysed reaction is carbamoyl phosphate + L-ornithine = L-citrulline + phosphate + H(+). It functions in the pathway amino-acid biosynthesis; L-arginine biosynthesis; L-arginine from L-ornithine and carbamoyl phosphate: step 1/3. In terms of biological role, reversibly catalyzes the transfer of the carbamoyl group from carbamoyl phosphate (CP) to the N(epsilon) atom of ornithine (ORN) to produce L-citrulline. This chain is Ornithine carbamoyltransferase (argF), found in Corynebacterium glutamicum (strain ATCC 13032 / DSM 20300 / JCM 1318 / BCRC 11384 / CCUG 27702 / LMG 3730 / NBRC 12168 / NCIMB 10025 / NRRL B-2784 / 534).